The sequence spans 126 residues: MAILGLGTDIAEIERIEKALGRTGEPFAKRILSEDEVIKFAELKQKGRYLAKRFAVKEAASKALGTGIAKGVTFHDFTVSNDEFGKPILTLSGVAKQIAESMGVNHVHLSISDERHYAVATVIFES.

Asp9 and Glu58 together coordinate Mg(2+).

It belongs to the P-Pant transferase superfamily. AcpS family. Mg(2+) is required as a cofactor.

The protein resides in the cytoplasm. It catalyses the reaction apo-[ACP] + CoA = holo-[ACP] + adenosine 3',5'-bisphosphate + H(+). Its function is as follows. Transfers the 4'-phosphopantetheine moiety from coenzyme A to a Ser of acyl-carrier-protein. The sequence is that of Holo-[acyl-carrier-protein] synthase from Vibrio campbellii (strain ATCC BAA-1116).